Here is a 164-residue protein sequence, read N- to C-terminus: Protein phosphatase 1 regulatory subunit 14C (164 aa).

Positions 1–19 (MSVVTGGGEAAGGGGGGGA) are enriched in gly residues. The disordered stretch occupies residues 1-70 (MSVVTGGGEA…QQQRRHQQGK (70 aa)). An N-acetylserine modification is found at S2. S25 carries the post-translational modification Phosphoserine. R27 carries the omega-N-methylarginine modification. The residue at position 33 (S33) is a Phosphoserine. Over residues 50 to 62 (VTTVAAAGQVQQQ) the composition is skewed to low complexity. Phosphothreonine; by ILK1 is present on T72.

It belongs to the PP1 inhibitor family. The main inhibitory site appears to be Thr-72. Has over 600-fold higher inhibitory activity when phosphorylated, creating a molecular switch for regulating the phosphorylation status of PPP1CA substrates and smooth muscle contraction. As to expression, detected in heart, muscle, spinal cord, hippocampus, hypothalamus, thalamus, midbrain, brain stem, cerebellum, brain cortex and olfactory bulb.

The protein resides in the endomembrane system. In terms of biological role, inhibitor of the PP1 regulatory subunit PPP1CA. In Mus musculus (Mouse), this protein is Protein phosphatase 1 regulatory subunit 14C (Ppp1r14c).